The chain runs to 244 residues: MKFGKLLKRQIEQSLPEWRDKFVSYKELKRIVASISGSPADEAAFVAALAADIDKIDSFFLEQEEEFVIRHRARTPIRFNSFELQEAIKKAAEAAAEVAGIRREIVDFHGEMVLLLSYSSINYIGVGKILKKHDKRTGGALAAPVAEAVRERRHFFKTETVSRMVRECEAMMAEAAVLPAEAAPEALAAAAEHGIFRNTVAALLTMEDVRRGSSTHGRHSLPPLTLPDSDWLRSFQPPSPIPIQ.

One can recognise an SPX domain in the interval 1–147; sequence MKFGKLLKRQ…GGALAAPVAE (147 aa). The interval 212 to 244 is disordered; the sequence is GSSTHGRHSLPPLTLPDSDWLRSFQPPSPIPIQ.

The chain is SPX domain-containing protein 6 (SPX6) from Oryza sativa subsp. indica (Rice).